The chain runs to 232 residues: Large ribosomal subunit protein uL1 (232 aa).

It belongs to the universal ribosomal protein uL1 family. As to quaternary structure, part of the 50S ribosomal subunit.

Its function is as follows. Binds directly to 23S rRNA. The L1 stalk is quite mobile in the ribosome, and is involved in E site tRNA release. In terms of biological role, protein L1 is also a translational repressor protein, it controls the translation of the L11 operon by binding to its mRNA. The polypeptide is Large ribosomal subunit protein uL1 (Xanthobacter autotrophicus (strain ATCC BAA-1158 / Py2)).